A 161-amino-acid polypeptide reads, in one-letter code: Nucleotide-binding protein XOO0647 (161 aa).

Belongs to the YajQ family.

Functionally, nucleotide-binding protein. The protein is Nucleotide-binding protein XOO0647 of Xanthomonas oryzae pv. oryzae (strain MAFF 311018).